The following is a 319-amino-acid chain: Acetyl esterase (319 aa).

The Involved in the stabilization of the negatively charged intermediate by the formation of the oxyanion hole motif lies at 91–93 (HGG). Catalysis depends on residues Ser-165, Asp-262, and His-292.

It belongs to the 'GDXG' lipolytic enzyme family. Homodimer. Interacts with MalT and MelA.

It localises to the cytoplasm. Its function is as follows. Displays esterase activity towards short chain fatty esters (acyl chain length of up to 8 carbons). Able to hydrolyze triacetylglycerol (triacetin) and tributyrylglycerol (tributyrin), but not trioleylglycerol (triolein) or cholesterol oleate. Negatively regulates MalT activity by antagonizing maltotriose binding. Inhibits MelA galactosidase activity. In Escherichia coli O17:K52:H18 (strain UMN026 / ExPEC), this protein is Acetyl esterase.